Reading from the N-terminus, the 251-residue chain is Capsid protein (251 aa).

The Bipartite nuclear localization signal signature appears at 3–20; the sequence is KRDAPWRLTAGTAKISRT. Residues 35-49 carry the Nuclear localization signal motif; that stretch reads RASAWVNRPMYRKPR. A zinc finger spans residues 63 to 80; sequence CEGPCKVQSFEQRHDVSH. The Nuclear export signal signature appears at 96–117; that stretch reads ITHRVGKRFCVKSVYILGKIWM. Residues 195–242 carry the Bipartite nuclear localization signal motif; it reads RRFWKVNNHVVYNHQEAGKYENHTENALLLYMACTHASNPVYATLKIR.

This sequence belongs to the geminiviridae capsid protein family. As to quaternary structure, homomultimer. Binds to single-stranded and double-stranded viral DNA. Interacts (via nuclear localization signals) with host importin alpha-1a.

It localises to the virion. The protein resides in the host nucleus. Encapsidates the viral DNA into characteristic twinned ('geminate') particles. Binds the genomic viral ssDNA and shuttles it into and out of the cell nucleus. The CP of bipartite geminiviruses is not required for cell-to-cell or systemic movement. The polypeptide is Capsid protein (Capsicum annuum (Capsicum pepper)).